We begin with the raw amino-acid sequence, 450 residues long: Chromosomal replication initiator protein DnaA (450 aa).

The interval 1–84 is domain I, interacts with DnaA modulators; it reads MENIHDLWDR…AVKFIIPPNQ (84 aa). Residues 84–111 form a domain II region; the sequence is QDDEELEFQSSKKKQRKPYEETNDFPQS. Positions 89-108 are disordered; the sequence is LEFQSSKKKQRKPYEETNDF. The domain III, AAA+ region stretch occupies residues 112–328; sequence MLNPKYTFDT…GALIRVVAYS (217 aa). ATP-binding residues include Gly156, Gly158, Lys159, and Thr160. Residues 329-450 are domain IV, binds dsDNA; that stretch reads SLINKEITAD…QEIQEKLKQL (122 aa).

It belongs to the DnaA family. As to quaternary structure, oligomerizes as a right-handed, spiral filament on DNA at oriC.

The protein localises to the cytoplasm. In terms of biological role, plays an essential role in the initiation and regulation of chromosomal replication. ATP-DnaA binds to the origin of replication (oriC) to initiate formation of the DNA replication initiation complex once per cell cycle. Binds the DnaA box (a 9 base pair repeat at the origin) and separates the double-stranded (ds)DNA. Forms a right-handed helical filament on oriC DNA; dsDNA binds to the exterior of the filament while single-stranded (ss)DNA is stabiized in the filament's interior. The ATP-DnaA-oriC complex binds and stabilizes one strand of the AT-rich DNA unwinding element (DUE), permitting loading of DNA polymerase. After initiation quickly degrades to an ADP-DnaA complex that is not apt for DNA replication. Binds acidic phospholipids. This is Chromosomal replication initiator protein DnaA from Geobacillus kaustophilus (strain HTA426).